We begin with the raw amino-acid sequence, 298 residues long: Putative S-adenosyl-L-methionine-dependent methyltransferase MSMEG_1480/MSMEI_1444 (298 aa).

Residues D127 and 156–157 (DL) each bind S-adenosyl-L-methionine.

The protein belongs to the UPF0677 family.

Its function is as follows. Exhibits S-adenosyl-L-methionine-dependent methyltransferase activity. In Mycolicibacterium smegmatis (strain ATCC 700084 / mc(2)155) (Mycobacterium smegmatis), this protein is Putative S-adenosyl-L-methionine-dependent methyltransferase MSMEG_1480/MSMEI_1444.